We begin with the raw amino-acid sequence, 624 residues long: Glutaminase 2 (624 aa).

The segment at 1 to 20 (MDTQPIRLPSVAGATRSAGY) is disordered. The tract at residues 43-325 (GELADYIPEL…LSARFDLHML (283 aa)) is glutaminase. Substrate-binding residues include serine 85, asparagine 134, glutamate 178, asparagine 185, tyrosine 209, tyrosine 261, and valine 279. The STAS domain occupies 355–466 (QQILDERHSD…ALLDDAIEWA (112 aa)). 491 to 608 (LLAELDTDEI…IMRNLAAILA (118 aa)) is a binding site for a nucleoside 3',5'-cyclic phosphate.

The protein belongs to the glutaminase family. Homotetramer.

The catalysed reaction is L-glutamine + H2O = L-glutamate + NH4(+). The protein is Glutaminase 2 (glsA2) of Bradyrhizobium diazoefficiens (strain JCM 10833 / BCRC 13528 / IAM 13628 / NBRC 14792 / USDA 110).